Consider the following 576-residue polypeptide: Arginine--tRNA ligase (576 aa).

Residues 123–133 carry the 'HIGH' region motif; sequence PNIGKEMHVGH.

This sequence belongs to the class-I aminoacyl-tRNA synthetase family. In terms of assembly, monomer.

The protein localises to the cytoplasm. The enzyme catalyses tRNA(Arg) + L-arginine + ATP = L-arginyl-tRNA(Arg) + AMP + diphosphate. The chain is Arginine--tRNA ligase from Wigglesworthia glossinidia brevipalpis.